Here is a 132-residue protein sequence, read N- to C-terminus: uncharacterized protein (132 aa).

A run of 3 helical transmembrane segments spans residues 19–39, 58–78, and 93–113; these read FTWI…FIFL, IGLR…VAVM, and LIAY…CAAL.

Belongs to the bacteriophage holin family. Cp-1 holin subfamily.

The protein resides in the cell membrane. This is an uncharacterized protein from Clostridium perfringens.